A 453-amino-acid chain; its full sequence is Midnolin-A (453 aa).

Residues 20-94 enclose the Ubiquitin-like domain; that stretch reads MNLNIQSTTG…LTLLPSVEAG (75 aa). 4 disordered regions span residues 184–219, 232–256, 333–376, and 390–429; these read SHLASCTPGPTPPTTLSPTSSTHCNGPHSSPLTTSV, CAEQAPCSTRGTEGTSSSPSSRSRK, RNAK…ENRA, and QKRLRRKARRDSRAPYHWMPTRKSSRTSSNSSTSSGEGSL. The span at 206–219 shows a compositional bias: polar residues; sequence HCNGPHSSPLTTSV. 2 stretches are compositionally biased toward low complexity: residues 239 to 252 and 338 to 351; these read STRGTEGTSSSPSS and TSPQSTSPQQTTHP. Residues 365 to 376 show a composition bias toward basic and acidic residues; that stretch reads SGDRLRQTENRA. Basic residues predominate over residues 390–399; it reads QKRLRRKARR. Residues 415–428 are compositionally biased toward low complexity; sequence RTSSNSSTSSGEGS.

It localises to the nucleus. Its subcellular location is the cytoplasm. The protein localises to the cytosol. It is found in the nucleolus. In terms of biological role, facilitates ubiquitin-independent proteasomal degradation of polycomb protein CBX4. Plays a role in inhibiting the activity of glucokinase GCK and both glucose-induced and basal insulin secretion. In Xenopus laevis (African clawed frog), this protein is Midnolin-A (midn-a).